The chain runs to 364 residues: Selenide, water dikinase (364 aa).

Selenocysteine 25 is a catalytic residue. A non-standard amino acid (selenocysteine) is located at residue selenocysteine 25. ATP contacts are provided by residues lysine 28, 46 to 48 (GYD), aspartate 66, aspartate 89, and 141 to 143 (GQT). Residue aspartate 48 participates in Mg(2+) binding. Aspartate 89 is a binding site for Mg(2+). A Mg(2+)-binding site is contributed by aspartate 244.

This sequence belongs to the selenophosphate synthase 1 family. Class II subfamily. Homodimer. It depends on Mg(2+) as a cofactor.

The enzyme catalyses hydrogenselenide + ATP + H2O = selenophosphate + AMP + phosphate + 2 H(+). Functionally, synthesizes selenophosphate from selenide and ATP. This chain is Selenide, water dikinase (selD), found in Dictyostelium discoideum (Social amoeba).